The following is a 206-amino-acid chain: Transmembrane emp24 domain-containing protein bai (206 aa).

The N-terminal stretch at 1–20 (MMKAILATLAIFGCIWPGQS) is a signal peptide. The Lumenal segment spans residues 21–172 (VMFHLTPNTQ…RDTNEKTNSR (152 aa)). A GOLD domain is found at 30-140 (QKCLKEDIQA…LKPLEVDLKR (111 aa)). A helical transmembrane segment spans residues 173 to 193 (VLFFSIFSMCCLLGLATWQVL). The Cytoplasmic portion of the chain corresponds to 194–206 (YLRRYFKAKKLIE).

This sequence belongs to the EMP24/GP25L family.

The protein resides in the membrane. Functionally, eca and bai are essential, though not redundant, for dorsoventral patterning of the embryo. Specifically required during early embryogenesis for the activity of maternal tkv, while the zygotic tkv is not affected. In Drosophila willistoni (Fruit fly), this protein is Transmembrane emp24 domain-containing protein bai.